The primary structure comprises 623 residues: tRNA uridine 5-carboxymethylaminomethyl modification enzyme MnmG (623 aa).

Residue glycine 12–glycine 17 participates in FAD binding. Residue glycine 272–phenylalanine 286 participates in NAD(+) binding.

This sequence belongs to the MnmG family. In terms of assembly, homodimer. Heterotetramer of two MnmE and two MnmG subunits. It depends on FAD as a cofactor.

Its subcellular location is the cytoplasm. In terms of biological role, NAD-binding protein involved in the addition of a carboxymethylaminomethyl (cmnm) group at the wobble position (U34) of certain tRNAs, forming tRNA-cmnm(5)s(2)U34. This Flavobacterium johnsoniae (strain ATCC 17061 / DSM 2064 / JCM 8514 / BCRC 14874 / CCUG 350202 / NBRC 14942 / NCIMB 11054 / UW101) (Cytophaga johnsonae) protein is tRNA uridine 5-carboxymethylaminomethyl modification enzyme MnmG.